Reading from the N-terminus, the 81-residue chain is Putative membrane protein insertion efficiency factor (81 aa).

Belongs to the UPF0161 family.

Its subcellular location is the cell inner membrane. Its function is as follows. Could be involved in insertion of integral membrane proteins into the membrane. The chain is Putative membrane protein insertion efficiency factor from Legionella pneumophila (strain Lens).